Reading from the N-terminus, the 406-residue chain is Bifunctional enzyme Fae/Hps (406 aa).

The interval methionine 1–isoleucine 164 is formaldehyde-activating enzyme. Histidine 20 serves as the catalytic Proton donor. Residues aspartate 22, leucine 51, lysine 69, threonine 71, and glutamine 86 each coordinate substrate. A 3-hexulose-6-phosphate synthase region spans residues methionine 165–isoleucine 406.

The protein in the N-terminal section; belongs to the formaldehyde-activating enzyme family. It in the C-terminal section; belongs to the HPS/KGPDC family. HPS subfamily.

The catalysed reaction is 5,6,7,8-tetrahydromethanopterin + formaldehyde = 5,10-methylenetetrahydromethanopterin + H2O. The enzyme catalyses D-ribulose 5-phosphate + formaldehyde = D-arabino-hex-3-ulose 6-phosphate. The protein operates within carbohydrate biosynthesis; D-ribose 5-phosphate biosynthesis. In terms of biological role, catalyzes the condensation of formaldehyde with tetrahydromethanopterin (H(4)MPT) to 5,10-methylenetetrahydromethanopterin. Its function is as follows. Catalyzes the reversible formation of ribulose-5-phosphate and formaldehyde from 3-hexulose-6-phosphate. The sequence is that of Bifunctional enzyme Fae/Hps from Methanosphaera stadtmanae (strain ATCC 43021 / DSM 3091 / JCM 11832 / MCB-3).